Reading from the N-terminus, the 101-residue chain is Protein Tat (101 aa).

Positions 1 to 24 (MDPVDPNLEPWNHPGSQPKTPCNK) are interaction with human CREBBP. The segment at 1 to 48 (MDPVDPNLEPWNHPGSQPKTPCNKCFCKVCCWHCQVCFLNKGLGISYG) is transactivation. Positions 22, 25, and 27 each coordinate Zn(2+). A cysteine-rich region spans residues 22–37 (CNKCFCKVCCWHCQVC). An N6-acetyllysine; by host PCAF modification is found at K28. Positions 30, 33, 34, and 37 each coordinate Zn(2+). Positions 38–48 (FLNKGLGISYG) are core. Residues 48–57 (GRKKRKHRRG) show a composition bias toward basic residues. The interval 48–101 (GRKKRKHRRGTPQSSKGHQDPVPKQPLPTTRGNPTGPKESKKEVASKAEADQCD) is disordered. Residues 49-57 (RKKRKHRRG) carry the Nuclear localization signal, RNA-binding (TAR), and protein transduction motif. The tract at residues 49–86 (RKKRKHRRGTPQSSKGHQDPVPKQPLPTTRGNPTGPKE) is interaction with the host capping enzyme RNGTT. Residues K50 and K51 each carry the N6-acetyllysine; by host EP300 and GCN5L2 modification. R52 carries the asymmetric dimethylarginine; by host PRMT6 modification. Residue K71 forms a Glycyl lysine isopeptide (Lys-Gly) (interchain with G-Cter in ubiquitin) linkage. Positions 85–101 (KESKKEVASKAEADQCD) are enriched in basic and acidic residues.

This sequence belongs to the lentiviruses Tat family. Interacts with host CCNT1. Associates with the P-TEFb complex composed at least of Tat, P-TEFb (CDK9 and CCNT1), TAR RNA, RNA Pol II. Recruits the HATs CREBBP, TAF1/TFIID, EP300, PCAF and GCN5L2. Interacts with host KAT5/Tip60; this interaction targets the latter to degradation. Interacts with the host deacetylase SIRT1. Interacts with host capping enzyme RNGTT; this interaction stimulates RNGTT. Binds to host KDR, and to the host integrins ITGAV/ITGB3 and ITGA5/ITGB1. Interacts with host KPNB1/importin beta-1 without previous binding to KPNA1/importin alpha-1. Interacts with EIF2AK2. Interacts with host nucleosome assembly protein NAP1L1; this interaction may be required for the transport of Tat within the nucleus, since the two proteins interact at the nuclear rim. Interacts with host C1QBP/SF2P32; this interaction involves lysine-acetylated Tat. Interacts with the host chemokine receptors CCR2, CCR3 and CXCR4. Interacts with host DPP4/CD26; this interaction may trigger an anti-proliferative effect. Interacts with host LDLR. Interacts with the host extracellular matrix metalloproteinase MMP1. Interacts with host PRMT6; this interaction mediates Tat's methylation. Interacts with, and is ubiquitinated by MDM2/Hdm2. Interacts with host PSMC3 and HTATIP2. Interacts with STAB1; this interaction may overcome SATB1-mediated repression of IL2 and IL2RA (interleukin) in T cells by binding to the same domain than HDAC1. Interacts (when acetylated) with human CDK13, thereby increasing HIV-1 mRNA splicing and promoting the production of the doubly spliced HIV-1 protein Nef. Interacts with host TBP; this interaction modulates the activity of transcriptional pre-initiation complex. Interacts with host RELA. Interacts with host PLSCR1; this interaction negatively regulates Tat transactivation activity by altering its subcellular distribution. Post-translationally, asymmetrical arginine methylation by host PRMT6 seems to diminish the transactivation capacity of Tat and affects the interaction with host CCNT1. Acetylation by EP300, CREBBP, GCN5L2/GCN5 and PCAF regulates the transactivation activity of Tat. EP300-mediated acetylation of Lys-50 promotes dissociation of Tat from the TAR RNA through the competitive binding to PCAF's bromodomain. In addition, the non-acetylated Tat's N-terminus can also interact with PCAF. PCAF-mediated acetylation of Lys-28 enhances Tat's binding to CCNT1. Lys-50 is deacetylated by SIRT1. In terms of processing, polyubiquitination by host MDM2 does not target Tat to degradation, but activates its transactivation function and fosters interaction with CCNT1 and TAR RNA. Post-translationally, phosphorylated by EIF2AK2 on serine and threonine residues adjacent to the basic region important for TAR RNA binding and function. Phosphorylation of Tat by EIF2AK2 is dependent on the prior activation of EIF2AK2 by dsRNA.

Its subcellular location is the host nucleus. The protein localises to the host nucleolus. It is found in the host cytoplasm. The protein resides in the secreted. In terms of biological role, transcriptional activator that increases RNA Pol II processivity, thereby increasing the level of full-length viral transcripts. Recognizes a hairpin structure at the 5'-LTR of the nascent viral mRNAs referred to as the transactivation responsive RNA element (TAR) and recruits the cyclin T1-CDK9 complex (P-TEFb complex) that will in turn hyperphosphorylate the RNA polymerase II to allow efficient elongation. The CDK9 component of P-TEFb and other Tat-activated kinases hyperphosphorylate the C-terminus of RNA Pol II that becomes stabilized and much more processive. Other factors such as HTATSF1/Tat-SF1, SUPT5H/SPT5, and HTATIP2 are also important for Tat's function. Besides its effect on RNA Pol II processivity, Tat induces chromatin remodeling of proviral genes by recruiting the histone acetyltransferases (HATs) CREBBP, EP300 and PCAF to the chromatin. This also contributes to the increase in proviral transcription rate, especially when the provirus integrates in transcriptionally silent region of the host genome. To ensure maximal activation of the LTR, Tat mediates nuclear translocation of NF-kappa-B by interacting with host RELA. Through its interaction with host TBP, Tat may also modulate transcription initiation. Tat can reactivate a latently infected cell by penetrating in it and transactivating its LTR promoter. In the cytoplasm, Tat is thought to act as a translational activator of HIV-1 mRNAs. Extracellular circulating Tat can be endocytosed by surrounding uninfected cells via the binding to several surface receptors such as CD26, CXCR4, heparan sulfate proteoglycans (HSPG) or LDLR. Neurons are rarely infected, but they internalize Tat via their LDLR. Through its interaction with nuclear HATs, Tat is potentially able to control the acetylation-dependent cellular gene expression. Modulates the expression of many cellular genes involved in cell survival, proliferation or in coding for cytokines or cytokine receptors. Tat plays a role in T-cell and neurons apoptosis. Tat induced neurotoxicity and apoptosis probably contribute to neuroAIDS. Circulating Tat also acts as a chemokine-like and/or growth factor-like molecule that binds to specific receptors on the surface of the cells, affecting many cellular pathways. In the vascular system, Tat binds to ITGAV/ITGB3 and ITGA5/ITGB1 integrins dimers at the surface of endothelial cells and competes with bFGF for heparin-binding sites, leading to an excess of soluble bFGF. The protein is Protein Tat of Homo sapiens (Human).